We begin with the raw amino-acid sequence, 730 residues long: Cyclin-dependent kinase 12 (730 aa).

2 disordered regions span residues 1–230 and 246–283; these read MEIS…APFS and FSLS…IATR. The span at 9–21 shows a compositional bias: basic and acidic residues; the sequence is THERDRKGSYGHR. The span at 57–67 shows a compositional bias: polar residues; it reads SISPQYKQRNW. Over residues 75–94 the composition is skewed to basic and acidic residues; that stretch reads GRDRGRNDFSYRKKGKDYNK. Composition is skewed to basic residues over residues 95–122 and 151–163; these read RRDK…KRRN and KSKK…RKHS. Over residues 194-203 the composition is skewed to low complexity; that stretch reads FNINPFQPMF. The segment covering 204–230 has biased composition (pro residues); it reads SQPPPPPLPPNSQFMTPPPRPPPAPFS. The region spanning 313-605 is the Protein kinase domain; that stretch reads MLDQIGEGTY…AKEALNHPWI (293 aa). ATP is bound by residues 317–325, Lys-340, and 398–403; these read IGEGTYGQV and EYVDHD. The active-site Proton acceptor is Asp-444. The disordered stretch occupies residues 623-730; sequence DCHEMWSKKQ…QSQYQSVFFK (108 aa). His-625 is an ATP binding site. Residues 676 to 688 show a composition bias toward basic residues; it reads NHHHHHHHSHHHA. A compositionally biased stretch (polar residues) spans 714 to 730; the sequence is NNHQPVPQSQYQSVFFK.

This sequence belongs to the protein kinase superfamily. CMGC Ser/Thr protein kinase family. CDC2/CDKX subfamily.

It localises to the nucleus. The catalysed reaction is [DNA-directed RNA polymerase] + ATP = phospho-[DNA-directed RNA polymerase] + ADP + H(+). The enzyme catalyses L-seryl-[protein] + ATP = O-phospho-L-seryl-[protein] + ADP + H(+). It carries out the reaction L-threonyl-[protein] + ATP = O-phospho-L-threonyl-[protein] + ADP + H(+). Its function is as follows. Cyclin-dependent kinase which displays CTD kinase activity: hyperphosphorylates 'Ser-2' in the C-terminal heptapeptide repeat domain (CTD) of the largest RNA polymerase II subunit, thereby acting as a key regulator of transcription elongation. Required for normal reproduction. In Caenorhabditis elegans, this protein is Cyclin-dependent kinase 12.